The primary structure comprises 115 residues: Large ribosomal subunit protein bL20c (115 aa).

This sequence belongs to the bacterial ribosomal protein bL20 family.

It localises to the plastid. The protein localises to the chloroplast. Functionally, binds directly to 23S ribosomal RNA and is necessary for the in vitro assembly process of the 50S ribosomal subunit. It is not involved in the protein synthesizing functions of that subunit. This chain is Large ribosomal subunit protein bL20c (rpl20), found in Chlorella vulgaris (Green alga).